A 1273-amino-acid chain; its full sequence is DNA gyrase subunit A (1273 aa).

A Topo IIA-type catalytic domain is found at 42–931 (LPEVRDGLKP…VDGDVNDEDL (890 aa)). Tyr130 functions as the O-(5'-phospho-DNA)-tyrosine intermediate in the catalytic mechanism. In terms of domain architecture, DOD-type homing endonuclease spans 256–396 (LFGAFISGGF…VQQMLLEFGV (141 aa)). Positions 958–964 (QKRGGKG) match the GyrA-box motif.

This sequence belongs to the type II topoisomerase GyrA/ParC subunit family. As to quaternary structure, heterotetramer, composed of two GyrA and two GyrB chains. In the heterotetramer, GyrA contains the active site tyrosine that forms a transient covalent intermediate with the DNA, while GyrB binds cofactors catalyzes ATP hydrolysis. This protein undergoes a protein self splicing that involves a post-translational excision of the intervening region (intein) followed by peptide ligation.

It is found in the cytoplasm. It catalyses the reaction ATP-dependent breakage, passage and rejoining of double-stranded DNA.. DNA supercoiling is inhibited by fluoroquinolones; IC(50) 1 ug/ml for sitafloxacin. Functionally, a type II topoisomerase that negatively supercoils closed circular double-stranded (ds) DNA in an ATP-dependent manner to modulate DNA topology and maintain chromosomes in an underwound state. Negative supercoiling favors strand separation, and DNA replication, transcription, recombination and repair, all of which involve strand separation. Also able to catalyze the interconversion of other topological isomers of dsDNA rings, including catenanes and knotted rings. Type II topoisomerases break and join 2 DNA strands simultaneously in an ATP-dependent manner. This chain is DNA gyrase subunit A, found in Mycobacterium leprae (strain TN).